The chain runs to 1124 residues: Phytochrome A (1124 aa).

Over residues 1 to 19 the composition is skewed to low complexity; that stretch reads MSTTRPSQSSNNSGRSRNS. The tract at residues 1 to 21 is disordered; it reads MSTTRPSQSSNNSGRSRNSAR. The 184-residue stretch at 218-401 folds into the GAF domain; that stretch reads SMERLCDTMV…VFAIHVNKEI (184 aa). Cys323 contributes to the phytochromobilin binding site. PAS domains follow at residues 617–687 and 750–821; these read VTSE…LQGE and DYKA…VNFG. Positions 901 to 1120 constitute a Histidine kinase domain; sequence YMKRQIRNPL…ILSVELAAAH (220 aa).

It belongs to the phytochrome family. Homodimer. Contains one covalently linked phytochromobilin chromophore.

Regulatory photoreceptor which exists in two forms that are reversibly interconvertible by light: the Pr form that absorbs maximally in the red region of the spectrum and the Pfr form that absorbs maximally in the far-red region. Photoconversion of Pr to Pfr induces an array of morphogenic responses, whereas reconversion of Pfr to Pr cancels the induction of those responses. Pfr controls the expression of a number of nuclear genes including those encoding the small subunit of ribulose-bisphosphate carboxylase, chlorophyll A/B binding protein, protochlorophyllide reductase, rRNA, etc. It also controls the expression of its own gene(s) in a negative feedback fashion. The chain is Phytochrome A (PHYA) from Pisum sativum (Garden pea).